Reading from the N-terminus, the 1006-residue chain is Unconventional myosin-Id (1006 aa).

Ala-2 is subject to N-acetylalanine. Residues Phe-9–Ala-695 form the Myosin motor domain. Gly-102 to Thr-109 contacts ATP. Ser-200 is modified (phosphoserine). Tyr-536 is subject to Phosphotyrosine. The tract at residues Met-572–Asp-594 is actin-binding. IQ domains lie at Ile-699–Lys-719 and Thr-721–His-741. In terms of domain architecture, TH1 spans Gly-812–Gly-1005.

It belongs to the TRAFAC class myosin-kinesin ATPase superfamily. Myosin family. In terms of assembly, interacts (via the two IQ motifs) with calmodulin. Binds an additional calmodulin chain via a third, C-terminal region. Interacts with F-actin. As to expression, expressed in many tissues. Highest levels in brain, followed by lung and ovary; expression is lowest in spleen.

Its subcellular location is the cytoplasm. It localises to the perikaryon. The protein localises to the cell projection. It is found in the dendrite. The protein resides in the early endosome. Its subcellular location is the cell cortex. Unconventional myosin that functions as actin-based motor protein with ATPase activity. Plays a role in endosomal protein trafficking, and especially in the transfer of cargo proteins from early to recycling endosomes. Required for normal planar cell polarity in ciliated tracheal cells, for normal rotational polarity of cilia, and for coordinated, unidirectional ciliary movement in the trachea. Required for normal, polarized cilia organization in brain ependymal epithelial cells. This Homo sapiens (Human) protein is Unconventional myosin-Id (MYO1D).